The following is a 253-amino-acid chain: MPPAAPSVARSREGGGIGQRRLVFPKSARRTLPCPIALCLGLCLAAAAATTTRASAAAFASAGDTTAMSAFNLLHLVTKSQPVAPRACGLPSGSCRDKKNCKVVFSQQELRKRLTPLQYHVTQEKGTESAFEGEYTHHKDPGIYKCVVCGTPLFKSETKFDSGSGWPAFHDVISSEAIEFTDDFSYGMHRVETSCSQCGAHLGHIFDDGPRPTGKRYCINSASLSFTPADSSEAEGSGIKESGSPAAADRAEL.

The first 56 residues, 1 to 56 (MPPAAPSVARSREGGGIGQRRLVFPKSARRTLPCPIALCLGLCLAAAAATTTRASA), serve as a signal peptide directing secretion. Lysine 102 carries the post-translational modification N6-acetyllysine. A MsrB domain is found at 107 to 229 (QQELRKRLTP…NSASLSFTPA (123 aa)). The Zn(2+) site is built by cysteine 146, cysteine 149, cysteine 195, and cysteine 198. Cysteine 218 acts as the Nucleophile in catalysis. Residues 227–253 (TPADSSEAEGSGIKESGSPAAADRAEL) form a disordered region. Serine 244 carries the post-translational modification Phosphoserine. The Endoplasmic reticulum retention signal motif lies at 250 to 253 (RAEL).

The protein belongs to the MsrB Met sulfoxide reductase family. In terms of assembly, monomer. It depends on Zn(2+) as a cofactor. Widely expressed. Detected in the sensory epithelia of the organ of Corti and vestibular end organs as early as P2 up to adulthood (at protein level). In the organ of Corti, present in inner and outer hair cells and, to a lesser extent, in supporting cells (at protein level). In hair cells, distributed throughout the cell body. Barely detectable level in stereocilia. Also observed in spiral ganglion neurons, but not in the stria vascularis. In the vestibular end organs, found throughout the sensory epithelium, but more intense expression in hair cells than in supporting cells (at protein level). In vestibular hair cells, present within cell bodies and to a lesser extent in kinocilia. Barely detectable in stereocilia.

The protein resides in the endoplasmic reticulum. The enzyme catalyses L-methionyl-[protein] + [thioredoxin]-disulfide + H2O = L-methionyl-(R)-S-oxide-[protein] + [thioredoxin]-dithiol. The catalysed reaction is [thioredoxin]-disulfide + L-methionine + H2O = L-methionine (R)-S-oxide + [thioredoxin]-dithiol. Functionally, catalyzes the reduction of free and protein-bound methionine sulfoxide to methionine. The chain is Methionine-R-sulfoxide reductase B3, mitochondrial (Msrb3) from Mus musculus (Mouse).